A 1765-amino-acid chain; its full sequence is Sodium channel protein type 11 subunit alpha (1765 aa).

Topologically, residues 1–126 are cytoplasmic; it reads MEERYYPVIF…PLRSLMIRIS (126 aa). Residues 115–403 form an I repeat; sequence FNPLRSLMIR…VTMAYEEQNR (289 aa). A helical transmembrane segment spans residues 127–148; the sequence is VHSVFSMFIICTVIINCMFMAN. Residues 149–157 are Extracellular-facing; it reads SMERSFDND. A helical transmembrane segment spans residues 158–177; that stretch reads IPEYVFIGIYILEAVIKILA. Residues 178 to 189 lie on the Cytoplasmic side of the membrane; sequence RGFIVDEFSFLR. A helical transmembrane segment spans residues 190–209; the sequence is DPWNWLDFIVIGTAIATCFP. Residues 210-216 lie on the Extracellular side of the membrane; the sequence is GSQVNLS. An N-linked (GlcNAc...) asparagine glycan is attached at Asn214. Residues 217-236 form a helical; Voltage-sensor membrane-spanning segment; it reads ALRTFRVFRALKAISVISGL. Over 237 to 252 the chain is Cytoplasmic; sequence KVIVGALLRSVKKLVD. The helical transmembrane segment at 253-266 threads the bilayer; sequence VMVLTLFCLSIFAL. At 267–339 the chain is on the extracellular side; sequence VGQQLFMGIL…PDNNYTKFDN (73 aa). Cysteines 280 and 317 form a disulfide. Asn319 and Asn333 each carry an N-linked (GlcNAc...) asparagine glycan. Residues 340–364 constitute an intramembrane region (pore-forming); it reads FGWSFLAMFRVMTQDSWERLYRQIL. The Extracellular segment spans residues 365–371; that stretch reads RTSGIYF. A helical transmembrane segment spans residues 372-397; that stretch reads VFFFVVVIFLGSFYLLNLTLAVVTMA. Residues 398 to 567 lie on the Cytoplasmic side of the membrane; it reads YEEQNRNVAA…WLCIKKVLRT (170 aa). One copy of the II repeat lies at 554–820; that stretch reads CSPQWLCIKK…EGETRKTKVQ (267 aa). The helical transmembrane segment at 568-591 threads the bilayer; it reads IMTDPFTELAITICIIINTVFLAV. The Extracellular segment spans residues 592 to 602; that stretch reads EHHNMDDNLKT. Residues 603–626 form a helical membrane-spanning segment; the sequence is ILKIGNWVFTGIFIAEMCLKIIAL. Residues 627–634 are Cytoplasmic-facing; the sequence is DPYHYFRH. Residues 635-656 traverse the membrane as a helical segment; it reads GWNVFDSIVALLSLADVLYNTL. At 657–662 the chain is on the extracellular side; the sequence is SDNNRS. N-linked (GlcNAc...) asparagine glycosylation occurs at Asn660. The helical; Voltage-sensor transmembrane segment at 663–682 threads the bilayer; sequence FLASLRVLRVFKLAKSWPTL. The Cytoplasmic portion of the chain corresponds to 683 to 697; that stretch reads NTLIKIIGHSVGALG. Residues 698-720 traverse the membrane as a helical segment; that stretch reads NLTVVLTIVVFIFSVVGMRLFGT. Residues 721-741 lie on the Extracellular side of the membrane; it reads KFNKTAYATQERPRRRWHMDN. A glycan (N-linked (GlcNAc...) asparagine) is linked at Asn723. Residues 742–762 constitute an intramembrane region (pore-forming); sequence FYHSFLVVFRILCGEWIENMW. Topologically, residues 763 to 772 are extracellular; that stretch reads GCMQDMDGSP. A disulfide bond links Cys764 and Cys774. Residues 773–798 traverse the membrane as a helical segment; it reads LCIIVFVLIMVIGKLVVLNLFIALLL. Topologically, residues 799 to 1029 are cytoplasmic; sequence NSFSNEEKDG…WWNIRKTCYQ (231 aa). One copy of the III repeat lies at 1022–1319; the sequence is NIRKTCYQIV…KKYYNAMKKL (298 aa). Residues 1030–1052 traverse the membrane as a helical segment; that stretch reads IVKHSWFESFIIFVILLSSGALI. Residues 1053–1066 lie on the Extracellular side of the membrane; that stretch reads FEDVNLPSRPQVEK. Residues 1067–1092 form a helical membrane-spanning segment; it reads LLRCTDNIFTFIFLLEMILKWVAFGF. The Cytoplasmic segment spans residues 1093 to 1098; that stretch reads RRYFTS. A helical membrane pass occupies residues 1099 to 1116; that stretch reads AWCWLDFLIVVVSVLSLM. Asn1117 is a topological domain (extracellular). A helical; Voltage-sensor transmembrane segment spans residues 1118–1139; it reads LPSLKSFRTLRALRPLRALSQF. Residues 1140–1158 lie on the Cytoplasmic side of the membrane; the sequence is EGMKVVVYALISAIPAILN. The chain crosses the membrane as a helical span at residues 1159–1180; the sequence is VLLVCLIFWLVFCILGVNLFSG. Residues 1181 to 1223 lie on the Extracellular side of the membrane; the sequence is KFGRCINGTDINMYLDFTEVPNRSQCNISNYSWKVPQVNFDNV. Residues Asn1187, Asn1202, Asn1207, and Asn1210 are each glycosylated (N-linked (GlcNAc...) asparagine). Positions 1224 to 1245 form an intramembrane region, pore-forming; the sequence is GNAYLALLQVATYKGWLEIMNA. Topologically, residues 1246–1261 are extracellular; sequence AVDSREKDEQPDFEAN. A helical membrane pass occupies residues 1262–1288; sequence LYAYLYFVVFIIFGSFFTLNLFIGVII. The Cytoplasmic portion of the chain corresponds to 1289 to 1341; the sequence is DNFNQQQKKLGGQDIFMTEEQKKYYNAMKKLGTKKPQKPIPRPLNKCQAFVFD. The stretch at 1328–1619 is one IV repeat; sequence IPRPLNKCQA…WEKFDPEASQ (292 aa). The helical transmembrane segment at 1342–1365 threads the bilayer; the sequence is LVTSQVFDVIILGLIVLNMIIMMA. The Extracellular segment spans residues 1366-1376; it reads ESADQPKDVKK. The chain crosses the membrane as a helical span at residues 1377–1400; it reads TFDILNIAFVVIFTIECLIKVFAL. Residues 1401 to 1406 lie on the Cytoplasmic side of the membrane; sequence RQHYFT. A helical transmembrane segment spans residues 1407-1430; it reads NGWNLFDCVVVVLSIISTLVSRLE. At 1431–1440 the chain is on the extracellular side; the sequence is DSDISFPPTL. The helical; Voltage-sensor transmembrane segment at 1441–1463 threads the bilayer; it reads FRVVRLARIGRILRLVRAARGIR. The Cytoplasmic segment spans residues 1464–1478; the sequence is TLLFALMMSLPSLFN. Residues 1479–1501 traverse the membrane as a helical segment; that stretch reads IGLLLFLVMFIYAIFGMSWFSKV. At 1502–1515 the chain is on the extracellular side; sequence KKGSGIDDIFNFET. An intramembrane region (pore-forming) is located at residues 1516–1538; that stretch reads FTGSMLCLFQITTSAGWDTLLNP. The Extracellular portion of the chain corresponds to 1539–1559; sequence MLEAKEHCNSSSQDSCQQPQI. Residue Asn1547 is glycosylated (N-linked (GlcNAc...) asparagine). A helical transmembrane segment spans residues 1560–1584; the sequence is AVVYFVSYIIISFLIVVNMYIAVIL. Topologically, residues 1585-1765 are cytoplasmic; the sequence is ENFNTATEES…DVAKVKVHND (181 aa).

It belongs to the sodium channel (TC 1.A.1.10) family. Nav1.9/SCN11A subfamily. The voltage-resistant sodium channel consists of an ion conducting pore forming alpha-subunit regulated by one or more auxiliary subunits SCN1B, SCN2B and SCN3B. In terms of tissue distribution, expressed (at protein level) in myenteric sensory neurons. Expressed in small sensory neurons of the dorsal root ganglia (C-fiber neurons) and trigeminal ganglia.

The protein resides in the cell membrane. It carries out the reaction Na(+)(in) = Na(+)(out). With respect to regulation, activity is not sensitive to inhibition by tetrodotoxin. Its function is as follows. Sodium channel mediating the voltage-dependent sodium ion permeability of excitable membranes. Assuming opened or closed conformations in response to the voltage difference across the membrane, the protein forms a sodium-selective channel through which sodium ions may pass in accordance with their electrochemical gradient. Involved in membrane depolarization during action potential in nociceptors which function as key relay stations for the electrical transmission of pain signals from the periphery to the central nervous system. Also involved in rapid BDNF-evoked neuronal depolarization. In Rattus norvegicus (Rat), this protein is Sodium channel protein type 11 subunit alpha.